We begin with the raw amino-acid sequence, 253 residues long: Indole-3-glycerol phosphate synthase (253 aa).

This sequence belongs to the TrpC family.

It carries out the reaction 1-(2-carboxyphenylamino)-1-deoxy-D-ribulose 5-phosphate + H(+) = (1S,2R)-1-C-(indol-3-yl)glycerol 3-phosphate + CO2 + H2O. The protein operates within amino-acid biosynthesis; L-tryptophan biosynthesis; L-tryptophan from chorismate: step 4/5. The protein is Indole-3-glycerol phosphate synthase of Bacillus thuringiensis subsp. konkukian (strain 97-27).